The following is a 136-amino-acid chain: HTH-type transcriptional regulator CysB (136 aa).

An HTH lysR-type domain is found at 1 to 59 (MDVRQLRSLVTLVEVRFSVSRAAECLHLVQSAVTQHLKQLEAELGTRLFVRHGKRLVGL). The segment at residues 19 to 38 (VSRAAECLHLVQSAVTQHLK) is a DNA-binding region (H-T-H motif).

This sequence belongs to the LysR transcriptional regulatory family.

Its function is as follows. This protein is a positive regulator of gene expression for the cysteine regulon. This chain is HTH-type transcriptional regulator CysB (cysB), found in Thiocapsa roseopersicina.